Consider the following 257-residue polypeptide: Small ribosomal subunit protein uS2 (257 aa).

The segment at Gln-229 to Glu-257 is disordered.

Belongs to the universal ribosomal protein uS2 family.

The sequence is that of Small ribosomal subunit protein uS2 from Caldicellulosiruptor bescii (strain ATCC BAA-1888 / DSM 6725 / KCTC 15123 / Z-1320) (Anaerocellum thermophilum).